Reading from the N-terminus, the 256-residue chain is Proteasome subunit alpha (256 aa).

A disordered region spans residues 226 to 256 (LLPSQEESGSTDGEASGDAGDDKKTGDDKKS). The segment covering 245–256 (GDDKKTGDDKKS) has biased composition (basic and acidic residues).

This sequence belongs to the peptidase T1A family. As to quaternary structure, the 20S proteasome core is composed of 14 alpha and 14 beta subunits that assemble into four stacked heptameric rings, resulting in a barrel-shaped structure. The two inner rings, each composed of seven catalytic beta subunits, are sandwiched by two outer rings, each composed of seven alpha subunits. The catalytic chamber with the active sites is on the inside of the barrel. Has a gated structure, the ends of the cylinder being occluded by the N-termini of the alpha-subunits. Is capped by the proteasome-associated ATPase, ARC.

The protein resides in the cytoplasm. It participates in protein degradation; proteasomal Pup-dependent pathway. With respect to regulation, the formation of the proteasomal ATPase ARC-20S proteasome complex, likely via the docking of the C-termini of ARC into the intersubunit pockets in the alpha-rings, may trigger opening of the gate for substrate entry. Interconversion between the open-gate and close-gate conformations leads to a dynamic regulation of the 20S proteasome proteolysis activity. Its function is as follows. Component of the proteasome core, a large protease complex with broad specificity involved in protein degradation. The sequence is that of Proteasome subunit alpha from Saccharopolyspora erythraea (strain ATCC 11635 / DSM 40517 / JCM 4748 / NBRC 13426 / NCIMB 8594 / NRRL 2338).